Here is a 224-residue protein sequence, read N- to C-terminus: uncharacterized protein (224 aa).

N-linked (GlcNAc...) asparagine glycans are attached at residues asparagine 10, asparagine 70, and asparagine 74.

The protein resides in the endoplasmic reticulum. This is an uncharacterized protein from Saccharomyces cerevisiae (strain ATCC 204508 / S288c) (Baker's yeast).